The chain runs to 259 residues: MIQIDALPAFSDNYIWLLQDTAKRRCAVVDPGDAAPVERWLAANPEWVLSDILVTHHHNDHVGGVERLKQLSGARVCGPANERIPGRDLALDEGDKVDVLGVTFQVLAVPGHTLGHIAFFSDGPPTPVLFSGDTLFAAGCGRMFEGTPEQMQPALARLAALPEQTEVYCAHEYTLSNLRFAKAVEPTNTHVQQRFEDVTRLRAENRISLPSTIGLERLTNPFLRTSETLVKQKADEWKGHSNTSHVAVFAALRSWKDTF.

Zn(2+) contacts are provided by His56, His58, Asp60, His61, His112, Asp133, and His171.

This sequence belongs to the metallo-beta-lactamase superfamily. Glyoxalase II family. In terms of assembly, monomer. Zn(2+) is required as a cofactor.

It carries out the reaction an S-(2-hydroxyacyl)glutathione + H2O = a 2-hydroxy carboxylate + glutathione + H(+). It functions in the pathway secondary metabolite metabolism; methylglyoxal degradation; (R)-lactate from methylglyoxal: step 2/2. Functionally, thiolesterase that catalyzes the hydrolysis of S-D-lactoyl-glutathione to form glutathione and D-lactic acid. This chain is Hydroxyacylglutathione hydrolase, found in Pseudomonas putida (strain GB-1).